The sequence spans 400 residues: Lysophospholipid transporter LplT (400 aa).

12 helical membrane-spanning segments follow: residues 19-39 (VIVAQFLSAFGDNALLFATLA), 53-73 (VLQMVFVGAYILFAPFVGQIA), 91-111 (AGAAGICLGVNPFVGYTLVGI), 139-159 (LMEASTIAAILLGSVAGGVLA), 164-184 (IAALVACALAYAGAVAANLFI), 195-213 (SWRLSAMTRSFFSACVVLW), 227-247 (LFWGAGVTLRFLLVLWVPVAL), 257-277 (YLNAMVAVGIVVGAGAAAKLV), 281-301 (TVSRCMPAGILIGVVVAIFSL), 304-324 (ALLPAYALLLLIGMLGGFFVV), 352-372 (NSAMLLMLGLYSLAVLVGVPA), and 373-393 (VAIGIGFGVLFALAIAALWIW).

This sequence belongs to the major facilitator superfamily. LplT (TC 2.A.1.42) family.

It localises to the cell inner membrane. Catalyzes the facilitated diffusion of 2-acyl-glycero-3-phosphoethanolamine (2-acyl-GPE) into the cell. In Salmonella agona (strain SL483), this protein is Lysophospholipid transporter LplT.